We begin with the raw amino-acid sequence, 667 residues long: Transketolase (667 aa).

His-27 provides a ligand contact to substrate. Residues His-67 and Gly-115–Leu-117 contribute to the thiamine diphosphate site. Mg(2+) is bound at residue Asp-156. Thiamine diphosphate is bound by residues Gly-157 and Asn-186. Mg(2+)-binding residues include Asn-186 and Ile-188. Residues His-262, Arg-357, and Ser-384 each contribute to the substrate site. Thiamine diphosphate is bound at residue His-262. Glu-411 serves as the catalytic Proton donor. Residue Phe-437 coordinates thiamine diphosphate. 3 residues coordinate substrate: His-461, Asp-469, and Arg-520.

Belongs to the transketolase family. As to quaternary structure, homodimer. The cofactor is Mg(2+). Ca(2+) is required as a cofactor. Mn(2+) serves as cofactor. Requires Co(2+) as cofactor. It depends on thiamine diphosphate as a cofactor.

It catalyses the reaction D-sedoheptulose 7-phosphate + D-glyceraldehyde 3-phosphate = aldehydo-D-ribose 5-phosphate + D-xylulose 5-phosphate. In terms of biological role, catalyzes the transfer of a two-carbon ketol group from a ketose donor to an aldose acceptor, via a covalent intermediate with the cofactor thiamine pyrophosphate. This chain is Transketolase (tkt), found in Bacillus subtilis (strain 168).